The sequence spans 747 residues: Ubiquitin carboxyl-terminal hydrolase 13 (747 aa).

A USP domain is found at 140–668 (FGYENFGNTC…TAYVLFYKAM (529 aa)). The active-site Nucleophile is the cysteine 149. 2 disordered regions span residues 172–305 (PKKS…RPPD) and 318–367 (YENP…RKKS). Residues 174–183 (KSRESDQPRK) are compositionally biased toward basic and acidic residues. Serine 198 is modified (phosphoserine). Positions 225-235 (PVNSVNSNTAG) are enriched in polar residues. A compositionally biased stretch (basic and acidic residues) spans 251-260 (HVQDNNKKEG). A compositionally biased stretch (polar residues) spans 319-343 (ENPSRGSSNSNNLDLKGESNSSLST). The active-site Proton acceptor is histidine 619.

This sequence belongs to the peptidase C19 family.

The enzyme catalyses Thiol-dependent hydrolysis of ester, thioester, amide, peptide and isopeptide bonds formed by the C-terminal Gly of ubiquitin (a 76-residue protein attached to proteins as an intracellular targeting signal).. This Saccharomyces cerevisiae (strain ATCC 204508 / S288c) (Baker's yeast) protein is Ubiquitin carboxyl-terminal hydrolase 13 (UBP13).